A 511-amino-acid polypeptide reads, in one-letter code: Bifunctional purine biosynthesis protein PurH (511 aa).

The MGS-like domain occupies 1–146 (MTKRALVSVS…KNHADVTVVV (146 aa)).

It belongs to the PurH family.

It carries out the reaction (6R)-10-formyltetrahydrofolate + 5-amino-1-(5-phospho-beta-D-ribosyl)imidazole-4-carboxamide = 5-formamido-1-(5-phospho-D-ribosyl)imidazole-4-carboxamide + (6S)-5,6,7,8-tetrahydrofolate. The enzyme catalyses IMP + H2O = 5-formamido-1-(5-phospho-D-ribosyl)imidazole-4-carboxamide. The protein operates within purine metabolism; IMP biosynthesis via de novo pathway; 5-formamido-1-(5-phospho-D-ribosyl)imidazole-4-carboxamide from 5-amino-1-(5-phospho-D-ribosyl)imidazole-4-carboxamide (10-formyl THF route): step 1/1. It participates in purine metabolism; IMP biosynthesis via de novo pathway; IMP from 5-formamido-1-(5-phospho-D-ribosyl)imidazole-4-carboxamide: step 1/1. This is Bifunctional purine biosynthesis protein PurH from Shouchella clausii (strain KSM-K16) (Alkalihalobacillus clausii).